A 64-amino-acid polypeptide reads, in one-letter code: Large ribosomal subunit protein bL35 (64 aa).

A disordered region spans residues 1–31 (MPKMKTHSGAKKRFKLTGTGKLKRQQANRRH).

It belongs to the bacterial ribosomal protein bL35 family.

This is Large ribosomal subunit protein bL35 from Paenarthrobacter aurescens (strain TC1).